Here is a 1076-residue protein sequence, read N- to C-terminus: Vacuolar membrane protease (1076 aa).

Residues 1 to 11 (MKCYNPSAFVP) lie on the Cytoplasmic side of the membrane. A helical transmembrane segment spans residues 12–32 (MAVTLVTVVIYLGVFIPLLII). Residues 33-437 (HETVPSAPDD…TVFAVFRLRT (405 aa)) are Vacuolar-facing. N-linked (GlcNAc...) asparagine glycosylation is found at asparagine 50, asparagine 99, and asparagine 156. 2 residues coordinate Zn(2+): histidine 220 and aspartate 232. The active-site Proton acceptor is the glutamate 266. 3 residues coordinate Zn(2+): glutamate 267, glutamate 292, and histidine 364. A helical membrane pass occupies residues 438 to 458 (LFAWSLTLLIASPLILFAVSY). Over 459–491 (LLNRQEKFYFFAGSIKSKNPEDEPISLGGWRGA) the chain is Cytoplasmic. A helical membrane pass occupies residues 492–512 (FRFPITLFITSAITFACASLI). Over 513–525 (NKINPMIIYSSPY) the chain is Vacuolar. The chain crosses the membrane as a helical span at residues 526–546 (AVWSMSATLFFSVFWFIMAGC). The Cytoplasmic portion of the chain corresponds to 547–556 (NFVRPSALQR). The chain crosses the membrane as a helical span at residues 557–577 (GYAFMWMFVFGWILLVVATVY). Over 578-584 (EDRFKIS) the chain is Vacuolar. Residues 585-605 (GGYLFVFYEAAIFLATLIAIC) form a helical membrane-spanning segment. At 606 to 738 (EQFALPRKST…LPIWTWLVQY (133 aa)) the chain is on the cytoplasmic side. Disordered stretches follow at residues 619–662 (DSQN…EETV) and 701–720 (SYDG…HPYG). Positions 621-632 (QNDHSDNQDHHH) are enriched in basic and acidic residues. Acidic residues predominate over residues 647 to 660 (PNADDEAAEEDQEE). The chain crosses the membrane as a helical span at residues 739–759 (LLVGPFILVILGQVGLFLVAA). The Vacuolar segment spans residues 760–771 (LHQTGTDGSPLF). Residues 772 to 792 (LPYLIVAIFSILLLLPVTPFI) traverse the membrane as a helical segment. Residues 793-799 (HRLTHHM) are Cytoplasmic-facing. The chain crosses the membrane as a helical span at residues 800–820 (PTFFFLVFIGTLIYNLVAFPF). The Vacuolar segment spans residues 821–1076 (SPNNRYKAYF…LGLAFLLAYV (256 aa)). N-linked (GlcNAc...) asparagine glycosylation occurs at asparagine 912.

This sequence belongs to the peptidase M28 family. It depends on Zn(2+) as a cofactor.

The protein resides in the vacuole membrane. May be involved in vacuolar sorting and osmoregulation. This chain is Vacuolar membrane protease, found in Sclerotinia sclerotiorum (strain ATCC 18683 / 1980 / Ss-1) (White mold).